Consider the following 320-residue polypeptide: Transcription factor NAI1 (320 aa).

Residues 53-105 form a disordered region; sequence TKQMKTNNNMNSTSSSPSSSSSSGSRTSQVISFGSPDTKTNPVETSLNFSNQV. Residues 58–80 show a composition bias toward low complexity; it reads TNNNMNSTSSSPSSSSSSGSRTS. Residues 81-105 show a composition bias toward polar residues; sequence QVISFGSPDTKTNPVETSLNFSNQV. The bHLH domain occupies 128-177; it reads HLLKEHVLAERKRRQKLNERLIALSALLPGLKKTDKATVLEDAIKHLKQL.

As to quaternary structure, homodimer. In terms of tissue distribution, expressed constitutively in roots, leaves, stems, and flowers.

The protein localises to the nucleus. Transcription activator that regulates the expression of at least NAI2, PYK10 and PBP1. Required for and mediates the formation of endoplasmic reticulum bodies (ER bodies). Involved in the symbiotic interactions with the endophytes of the Sebacinaceae fungus family, such as Piriformospora indica and Sebacina. The protein is Transcription factor NAI1 (NAI1) of Arabidopsis thaliana (Mouse-ear cress).